The primary structure comprises 255 residues: Chlorocatechol 1,2-dioxygenase (255 aa).

Fe cation contacts are provided by tyrosine 130, tyrosine 164, histidine 188, and histidine 190.

Belongs to the intradiol ring-cleavage dioxygenase family. It depends on Fe(3+) as a cofactor.

It catalyses the reaction 3,5-dichlorocatechol + O2 = (2E,4E)-2,4-dichloromuconate + 2 H(+). The protein operates within aromatic compound metabolism; 3-chlorocatechol degradation. Its function is as follows. Preferentially converts 3,5-dichlorocatechol as opposed to other chlorinated catechols. Retains diminished activity toward non-chlorinated substrates. The sequence is that of Chlorocatechol 1,2-dioxygenase (tfdC) from Burkholderia cepacia (Pseudomonas cepacia).